Here is a 746-residue protein sequence, read N- to C-terminus: MALPLLPGFSLGRNVGKEKFHKSQHWGYCNNVAMLLAEDKPGIGGEPLPGQKLIPKSSVFPAELGCGAPAWLAFDKQVLSFDAYFEEEVPDKNQEPYRIRHCKIYFYLEDDTIQVLEPQVKNSGIIQGTIVRRHRIPLPSPNEDQFYTIDHFNINAEVIFYARRYKIIDCDQFTKHFLRKMGFKLNPPGNRPDDPYTKERQKILDSMNPLRPYERIDTLKQFLEHDGHVLRFYCVWDDPESLFHDPRELVLHYYLSDDTIDIKEVIPVNSGRDVVPLFLRRDKLPKYAPTGLYQPGTITSRTVLNVFGNLVGNRGRYILDNRKTGAVHQEFYRDSDLKIGAVINVWGRQIMLCDCDEFTKDYYRTKYGIEDFTPVPYKAPPPPKAEKPIPPYTGFGSEEDSLCSCMSLLPKPPQKDFKKFMEKDRCGLESNTLRFLAKLVTDSPIDKDRKFIICYFLMMPLYSVFEHSQRNTGIIGGKFLEKGRIKKPGQELFKSEPSEYFKAQDLFIGARVCFHGHNFLLVDADEYTINYMEKHANEFAVADTGFIFKKLKDIAEPRSREIRQVFAAADPQHTKVIEYDPFRNLIVSITDGAFSEHEIMTLGRHYGEKEEYEIDHHFLLAKAQEQLKKNSFENFEQLSTILVYNDREKCGALPYETCRTICKSFKLPLSDDLLQTILTMFEDDHKQVNYKKFVDAVNWREHQIPSFHTIKLPPKNEDDWNGQPPFLPVKRIKYLPLLDDLFGKEE.

DM10 domains are found at residues 75-182 (DKQV…RKMG), 226-367 (DGHV…RTKY), and 429-536 (ESNT…EKHA). The 36-residue stretch at 557–592 (PRSREIRQVFAAADPQHTKVIEYDPFRNLIVSITDG) folds into the EF-hand domain.

The protein resides in the cytoplasm. It is found in the cytoskeleton. Its subcellular location is the cilium axoneme. In terms of biological role, microtubule inner protein (MIP) part of the dynein-decorated doublet microtubules (DMTs) in cilia axoneme, which is required for motile cilia beating. The sequence is that of EF-hand domain-containing family member C2 (EFHC2) from Gallus gallus (Chicken).